Here is a 282-residue protein sequence, read N- to C-terminus: Bifunctional protein FolD (282 aa).

NADP(+) is bound by residues 166-168 (GAS) and Ile-232.

It belongs to the tetrahydrofolate dehydrogenase/cyclohydrolase family. Homodimer.

It carries out the reaction (6R)-5,10-methylene-5,6,7,8-tetrahydrofolate + NADP(+) = (6R)-5,10-methenyltetrahydrofolate + NADPH. It catalyses the reaction (6R)-5,10-methenyltetrahydrofolate + H2O = (6R)-10-formyltetrahydrofolate + H(+). It functions in the pathway one-carbon metabolism; tetrahydrofolate interconversion. In terms of biological role, catalyzes the oxidation of 5,10-methylenetetrahydrofolate to 5,10-methenyltetrahydrofolate and then the hydrolysis of 5,10-methenyltetrahydrofolate to 10-formyltetrahydrofolate. This chain is Bifunctional protein FolD, found in Haemophilus influenzae (strain PittGG).